The primary structure comprises 91 residues: Probable translocation protein y4yM (91 aa).

2 helical membrane-spanning segments follow: residues 15-35 (VVFM…GLTI) and 55-75 (LLVV…PLIE).

It belongs to the FliQ/MopD/SpaQ family.

Its subcellular location is the cell membrane. Functionally, could be involved in the secretion of an unknown factor. The sequence is that of Probable translocation protein y4yM from Sinorhizobium fredii (strain NBRC 101917 / NGR234).